The sequence spans 505 residues: Maturase K (505 aa).

It belongs to the intron maturase 2 family. MatK subfamily.

It is found in the plastid. The protein localises to the chloroplast. Its function is as follows. Usually encoded in the trnK tRNA gene intron. Probably assists in splicing its own and other chloroplast group II introns. The protein is Maturase K of Idiospermum australiense (Ribbonwood tree).